Reading from the N-terminus, the 182-residue chain is UPF0397 protein VV2_1534 (182 aa).

5 helical membrane-spanning segments follow: residues 8–28 (VVVI…MFGI), 41–61 (AVLA…VGFI), 72–92 (WGVW…IGLF), 110–130 (FSLF…CSAF), and 146–166 (QLTI…YFIL).

Belongs to the UPF0397 family.

It localises to the cell membrane. This is UPF0397 protein VV2_1534 from Vibrio vulnificus (strain CMCP6).